The sequence spans 421 residues: Adenosylhomocysteinase (421 aa).

D128 and E153 together coordinate substrate. Residue 154-156 (TTT) coordinates NAD(+). Residues K183 and D187 each contribute to the substrate site. Residues N188, 217-222 (GYGWCG), E240, 296-298 (AGH), and N343 contribute to the NAD(+) site.

The protein belongs to the adenosylhomocysteinase family. NAD(+) is required as a cofactor.

The protein resides in the cytoplasm. It carries out the reaction S-adenosyl-L-homocysteine + H2O = L-homocysteine + adenosine. The protein operates within amino-acid biosynthesis; L-homocysteine biosynthesis; L-homocysteine from S-adenosyl-L-homocysteine: step 1/1. Functionally, may play a key role in the regulation of the intracellular concentration of adenosylhomocysteine. In Thermococcus kodakarensis (strain ATCC BAA-918 / JCM 12380 / KOD1) (Pyrococcus kodakaraensis (strain KOD1)), this protein is Adenosylhomocysteinase.